A 301-amino-acid chain; its full sequence is Lysozyme-like protein 3 (301 aa).

The signal sequence occupies residues 1–15; sequence MKLFALLVSITLCYS. One can recognise a Ch-type lysozyme domain in the interval 64–282; it reads HAYSVDISFH…HLSQIVHFST (219 aa).

Belongs to the glycosyl hydrolase 25 family.

Functionally, plays a role in the stress response to heavy metals such as copper, probably in a kgb-1-dependent manner. This is Lysozyme-like protein 3 from Caenorhabditis elegans.